An 89-amino-acid polypeptide reads, in one-letter code: Large ribosomal subunit protein bL27 (89 aa).

The interval 1–24 is disordered; it reads MAHKKAGGSSRNGRDSAGRRLGVK.

This sequence belongs to the bacterial ribosomal protein bL27 family.

This Maricaulis maris (strain MCS10) (Caulobacter maris) protein is Large ribosomal subunit protein bL27.